Consider the following 720-residue polypeptide: Zinc finger protein 408 (720 aa).

Residues 201-350 (VQQEVASPGE…GPAGSSPKQG (150 aa)) form a disordered region. Over residues 275 to 285 (LQSNSATQQDP) the composition is skewed to polar residues. The span at 287–296 (GSGASFSSSA) shows a compositional bias: low complexity. Threonine 322 carries the post-translational modification Phosphothreonine. C2H2-type zinc fingers lie at residues 353–375 (YRCG…AFVH), 381–403 (FLCT…MLGH), 409–431 (FPCP…QVVH), 437–459 (FACD…RKTH), 468–490 (CPCP…MRLH), 496–518 (FLCP…LRLH), 524–546 (YRCP…LISH), 551–573 (HLCP…ERLH), 579–601 (FPCP…LKSH), and 607–629 (YRCP…QLSH).

Highest expression is observed in adult retina; abundantly expressed in the fetal eye. In the retina, it is detected in the outer nuclear layer, especially cone and rod photoreceptor cells, ganglion cell layer and both outer and inner plexiform layers (at protein level). Expressed in retinal blood vessels (at protein level).

Its subcellular location is the nucleus. Its function is as follows. May be involved in transcriptional regulation. The polypeptide is Zinc finger protein 408 (ZNF408) (Homo sapiens (Human)).